A 107-amino-acid chain; its full sequence is MNYQHYRATTLGRTLQDTLDEMMERGDITKKIANLVLLRYDKSISTALKDHGTSNMSFTAERLETFRCCDNVWTLILKDAEFREDQHSLKVDVVKIVACLGTDNGNE.

It belongs to the TFIIA subunit 2 family. In terms of assembly, TFIIA is a heterodimer of the large unprocessed subunit 1 and a small subunit gamma. It was originally believed to be a heterotrimer of an alpha (p30), a beta (p20) and a gamma (p14) subunit.

Its subcellular location is the nucleus. TFIIA is a component of the transcription machinery of RNA polymerase II and plays an important role in transcriptional activation. TFIIA in a complex with TBP mediates transcriptional activity. The polypeptide is Transcription initiation factor IIA subunit 2-2 (TfIIA-S-2) (Drosophila melanogaster (Fruit fly)).